A 118-amino-acid polypeptide reads, in one-letter code: MRANVLKRKLTLRIKRKKRIRAKISGCENFPRISVFKSNRTLYIQAIDDVKAVTLAAVDGRKLGVKANKEGAKKIAAEFAKTLKAKKIEQAVFDRNGYVYHGVIAVLAESLRENGIRL.

It belongs to the universal ribosomal protein uL18 family. In terms of assembly, part of the 50S ribosomal subunit; part of the 5S rRNA/L5/L18/L25 subcomplex. Contacts the 5S and 23S rRNAs.

In terms of biological role, this is one of the proteins that bind and probably mediate the attachment of the 5S RNA into the large ribosomal subunit, where it forms part of the central protuberance. The chain is Large ribosomal subunit protein uL18 from Campylobacter jejuni subsp. doylei (strain ATCC BAA-1458 / RM4099 / 269.97).